A 205-amino-acid polypeptide reads, in one-letter code: Small ribosomal subunit protein uS4 (205 aa).

The span at 1–12 (MSKRIQAKHKLD) shows a compositional bias: basic residues. The tract at residues 1-49 (MSKRIQAKHKLDRRMGQNIWGRPKSPVNRREYGPGQHGQRRKGKMSDFG) is disordered. Residues 94-155 (RRLDAVVYRA…SSRQLEIVIV (62 aa)) enclose the S4 RNA-binding domain.

Belongs to the universal ribosomal protein uS4 family. In terms of assembly, part of the 30S ribosomal subunit. Contacts protein S5. The interaction surface between S4 and S5 is involved in control of translational fidelity.

One of the primary rRNA binding proteins, it binds directly to 16S rRNA where it nucleates assembly of the body of the 30S subunit. Its function is as follows. With S5 and S12 plays an important role in translational accuracy. In Methylobacterium radiotolerans (strain ATCC 27329 / DSM 1819 / JCM 2831 / NBRC 15690 / NCIMB 10815 / 0-1), this protein is Small ribosomal subunit protein uS4.